Reading from the N-terminus, the 439-residue chain is tRNA modification GTPase MnmE (439 aa).

Positions 20, 78, and 116 each coordinate (6S)-5-formyl-5,6,7,8-tetrahydrofolate. The region spanning 211–364 is the TrmE-type G domain; it reads GIYVAILGEP…LLSAIQKKVE (154 aa). GTP-binding positions include 221–226, 240–246, and 265–268; these read NSGKST, SEYAGTT, and DTAG. Mg(2+) contacts are provided by S225 and T246. K439 serves as a coordination point for (6S)-5-formyl-5,6,7,8-tetrahydrofolate.

The protein belongs to the TRAFAC class TrmE-Era-EngA-EngB-Septin-like GTPase superfamily. TrmE GTPase family. As to quaternary structure, homodimer. Heterotetramer of two MnmE and two MnmG subunits. Requires K(+) as cofactor.

The protein resides in the cytoplasm. Functionally, exhibits a very high intrinsic GTPase hydrolysis rate. Involved in the addition of a carboxymethylaminomethyl (cmnm) group at the wobble position (U34) of certain tRNAs, forming tRNA-cmnm(5)s(2)U34. The sequence is that of tRNA modification GTPase MnmE from Ehrlichia ruminantium (strain Gardel).